The following is a 203-amino-acid chain: Excretory canal abnormal exc-13 (203 aa).

The signal sequence occupies residues 1-20 (MIGFLKFALIGTVLLGVANG). Asn-32, Asn-84, and Asn-188 each carry an N-linked (GlcNAc...) asparagine glycan.

This sequence belongs to the UPF0376 family.

The protein localises to the secreted. This Caenorhabditis elegans protein is Excretory canal abnormal exc-13.